A 268-amino-acid polypeptide reads, in one-letter code: Esterase PIR7B (268 aa).

Ser-86 acts as the Acyl-ester intermediate in catalysis. Catalysis depends on charge relay system residues Asp-218 and His-246.

It belongs to the AB hydrolase superfamily.

In terms of biological role, exhibits esterase activity towards naphthol AS-acetate in vitro. The chain is Esterase PIR7B (PIR7B) from Oryza sativa subsp. japonica (Rice).